Here is a 298-residue protein sequence, read N- to C-terminus: GTPase Era (298 aa).

The 168-residue stretch at 4-171 (KSGFVSIVGR…VEGIFELLPE (168 aa)) folds into the Era-type G domain. The G1 stretch occupies residues 12–19 (GRPNVGKS). 12–19 (GRPNVGKS) provides a ligand contact to GTP. The G2 stretch occupies residues 38 to 42 (QTTRN). The interval 59–62 (DTPG) is G3. GTP-binding positions include 59 to 63 (DTPGV) and 121 to 124 (NKID). A G4 region spans residues 121–124 (NKID). The G5 stretch occupies residues 150 to 152 (ISA). Residues 202 to 280 (TREEIPHSVA…YLDLWVKVKE (79 aa)) form the KH type-2 domain.

It belongs to the TRAFAC class TrmE-Era-EngA-EngB-Septin-like GTPase superfamily. Era GTPase family. Monomer.

It is found in the cytoplasm. Its subcellular location is the cell membrane. An essential GTPase that binds both GDP and GTP, with rapid nucleotide exchange. Plays a role in 16S rRNA processing and 30S ribosomal subunit biogenesis and possibly also in cell cycle regulation and energy metabolism. The sequence is that of GTPase Era from Carboxydothermus hydrogenoformans (strain ATCC BAA-161 / DSM 6008 / Z-2901).